The chain runs to 79 residues: Large ribosomal subunit protein uL30 (79 aa).

Belongs to the universal ribosomal protein uL30 family. Part of the 50S ribosomal subunit.

This chain is Large ribosomal subunit protein uL30, found in Anaeromyxobacter sp. (strain Fw109-5).